We begin with the raw amino-acid sequence, 161 residues long: Putative sporulation sigma factor-processing peptidase (161 aa).

Asp-38 is a catalytic residue.

The protein belongs to the peptidase U4 family.

In terms of biological role, probably activates the RNA polymerase sigma-35 factor at the stage II of sporulation. The protein is Putative sporulation sigma factor-processing peptidase of Bacillus thuringiensis subsp. kurstaki.